A 256-amino-acid polypeptide reads, in one-letter code: Triosephosphate isomerase (256 aa).

A substrate-binding site is contributed by 12–14; that stretch reads NWK. The active-site Electrophile is His99. Residue Glu169 is the Proton acceptor of the active site. Substrate-binding positions include Gly175, Ser214, and 235 to 236; that span reads GG.

It belongs to the triosephosphate isomerase family. As to quaternary structure, homodimer.

The protein resides in the cytoplasm. The catalysed reaction is D-glyceraldehyde 3-phosphate = dihydroxyacetone phosphate. Its pathway is carbohydrate biosynthesis; gluconeogenesis. The protein operates within carbohydrate degradation; glycolysis; D-glyceraldehyde 3-phosphate from glycerone phosphate: step 1/1. Its function is as follows. Involved in the gluconeogenesis. Catalyzes stereospecifically the conversion of dihydroxyacetone phosphate (DHAP) to D-glyceraldehyde-3-phosphate (G3P). This Rhizobium meliloti (strain 1021) (Ensifer meliloti) protein is Triosephosphate isomerase.